The sequence spans 390 residues: MKFVDEASILVVAGDGGNGCVSFRREKYIPKGGPDGGDGGDGGDVWMEADENLNTLIDYRFEKSFRAERGQNGASRDCTGKRGKDVTIKVPVGTRVIDQGTGETMGDMTKHGQRLLVAKGGWHGLGNTRFKSSVNRTPRQKTNGTPGDKRDLLLELMLLADVGMLGMPNAGKSTFIRAVSAAKPKVADYPFTTLVPSLGVVRMDSEKSFVVADIPGLIEGAAEGAGLGIRFLKHLERCRVLLHLIDIDPIDGSDPVENARIIIGELEKYSQDLAAKPRWLVFNKIDLMDKTEAEEKAKAIAEALGWEGKYYLISAASQLGVKDLCWDVMTFIIENPIAQAEEAKQPEKVEFMWDDYHRQQLVEVEEDADDDWDDDWDEDDEEGVEFIYKR.

The Obg domain occupies Met1 to Leu159. The disordered stretch occupies residues Asn127 to Gly147. A compositionally biased stretch (polar residues) spans Arg129 to Thr145. The OBG-type G domain maps to Ala160–Ile333. GTP-binding positions include Gly166–Ser173, Phe191–Val195, Asp213–Gly216, Asn283–Asp286, and Ser314–Ala316. Mg(2+) is bound by residues Ser173 and Thr193.

It belongs to the TRAFAC class OBG-HflX-like GTPase superfamily. OBG GTPase family. In terms of assembly, monomer. Mg(2+) is required as a cofactor.

It is found in the cytoplasm. In terms of biological role, an essential GTPase which binds GTP, GDP and possibly (p)ppGpp with moderate affinity, with high nucleotide exchange rates and a fairly low GTP hydrolysis rate. Plays a role in control of the cell cycle, stress response, ribosome biogenesis and in those bacteria that undergo differentiation, in morphogenesis control. The sequence is that of GTPase Obg from Salmonella gallinarum (strain 287/91 / NCTC 13346).